Consider the following 218-residue polypeptide: Zinc metalloproteinase-disintegrin-like bothrojarin-2 (218 aa).

In terms of domain architecture, Disintegrin spans 14–100 (PPVCGNELLE…QCPTDDFHKN (87 aa)). Residues valine 16, leucine 21, glutamate 23, glutamate 26, and aspartate 29 each contribute to the Ca(2+) site. Disulfide bonds link cysteine 28/cysteine 46, cysteine 30/cysteine 41, cysteine 40/cysteine 63, cysteine 54/cysteine 60, cysteine 59/cysteine 85, cysteine 72/cysteine 92, cysteine 79/cysteine 111, cysteine 104/cysteine 116, cysteine 123/cysteine 173, and cysteine 151/cysteine 161. The D/ECD-tripeptide signature appears at 78 to 80 (ECD).

The protein belongs to the venom metalloproteinase (M12B) family. P-III subfamily. P-IIIa sub-subfamily. In terms of assembly, monomer. Requires Zn(2+) as cofactor. In terms of processing, glycosylated. In terms of tissue distribution, expressed by the venom gland.

It localises to the secreted. Functionally, the hemorrhagic metalloproteinase-disintegrin-like bothrojarin-1 is a potent inhibitor of collagen-induced platelet aggregation by blockage of alpha-2/beta-1 (ITGA2/ITGB1) integrin. It does not present any fibrinogen-clotting activity. This is Zinc metalloproteinase-disintegrin-like bothrojarin-2 from Bothrops jararaca (Jararaca).